The primary structure comprises 93 residues: Small ribosomal subunit protein uS19 (93 aa).

The protein belongs to the universal ribosomal protein uS19 family.

Its function is as follows. Protein S19 forms a complex with S13 that binds strongly to the 16S ribosomal RNA. The sequence is that of Small ribosomal subunit protein uS19 from Streptococcus gordonii (strain Challis / ATCC 35105 / BCRC 15272 / CH1 / DL1 / V288).